We begin with the raw amino-acid sequence, 22 residues long: Brevinin-2LTa (22 aa).

As to expression, expressed by the skin glands.

The protein resides in the secreted. In terms of biological role, has antibacterial activity. This is Brevinin-2LTa from Rana latastei (Italian agile frog).